Here is a 458-residue protein sequence, read N- to C-terminus: Delta(8)-fatty-acid desaturase (458 aa).

A Cytochrome b5 heme-binding domain is found at 16-100; it reads KKYITSKELK…LKDYQVSDIS (85 aa). Heme contacts are provided by histidine 51 and histidine 74. 2 helical membrane-spanning segments follow: residues 122-142 and 147-167; these read GVIY…YGVL and FWIH…IAYL. Positions 169–173 match the Histidine box-1 motif; the sequence is HDAGH. The chain crosses the membrane as a helical span at residues 185–205; that stretch reads FAGIFIGNCITGISIAWWKWT. Residues 206-210 carry the Histidine box-2 motif; the sequence is HNAHH. 3 helical membrane-spanning segments follow: residues 264-284, 293-313, and 320-340; these read YYPI…LLLI, GLNI…VSRL, and VAFV…FTLN. A Histidine box-3 motif is present at residues 383–387; it reads QLEHH.

This sequence belongs to the fatty acid desaturase type 1 family. The cofactor is Fe cation.

The protein resides in the membrane. The enzyme catalyses an N-acyl-(4R)-4-hydroxysphinganine + 2 Fe(II)-[cytochrome b5] + O2 + 2 H(+) = a (4R,8E)-4-hydroxysphingenine ceramide + 2 Fe(III)-[cytochrome b5] + 2 H2O. It catalyses the reaction an N-acyl-(4R)-4-hydroxysphinganine + 2 Fe(II)-[cytochrome b5] + O2 + 2 H(+) = a (4R,8Z)-4-hydroxysphing-8-enine ceramide + 2 Fe(III)-[cytochrome b5] + 2 H2O. Its function is as follows. Plays a major role as delta(8)-fatty-acid desaturase which introduces a double bond at the 8-position in the long-chain base (LCB) of ceramides with or without a hydroxy group at the 4-position. The enzyme produces both the 8E and 8Z isomers. This structural modification contributes to the quantitative partitioning of ceramides between the two major sphingolipid classes, glucosylceramides and glycosylinositolphosphoryl ceramides. Sphingolipids are important membrane components involved in environmental stress responses, such as resistance to chilling, and act as cell signaling molecules. The polypeptide is Delta(8)-fatty-acid desaturase (sld1) (Helianthus annuus (Common sunflower)).